Reading from the N-terminus, the 377-residue chain is 23S rRNA (uracil(747)-C(5))-methyltransferase RlmC (377 aa).

[4Fe-4S] cluster is bound by residues Cys-3, Cys-11, Cys-14, and Cys-87. S-adenosyl-L-methionine-binding residues include Gln-212, Phe-241, Glu-262, and Asn-307. Cys-334 functions as the Nucleophile in the catalytic mechanism.

Belongs to the class I-like SAM-binding methyltransferase superfamily. RNA M5U methyltransferase family. RlmC subfamily.

It catalyses the reaction uridine(747) in 23S rRNA + S-adenosyl-L-methionine = 5-methyluridine(747) in 23S rRNA + S-adenosyl-L-homocysteine + H(+). In terms of biological role, catalyzes the formation of 5-methyl-uridine at position 747 (m5U747) in 23S rRNA. The polypeptide is 23S rRNA (uracil(747)-C(5))-methyltransferase RlmC (Xenorhabdus bovienii (strain SS-2004) (Xenorhabdus nematophila subsp. bovienii)).